The sequence spans 226 residues: AA9 family lytic polysaccharide monooxygenase E (226 aa).

The N-terminal stretch at 1–18 is a signal peptide; that stretch reads MLANGAIVFLAAALGVSG. Histidine 19 lines the Cu(2+) pocket. Intrachain disulfides connect cysteine 56–cysteine 174 and cysteine 144–cysteine 226. Asparagine 69 carries an N-linked (GlcNAc...) asparagine glycan. Histidine 86 lines the Cu(2+) pocket. O2 is bound by residues histidine 160 and glutamine 169. Tyrosine 171 is a binding site for Cu(2+).

Belongs to the polysaccharide monooxygenase AA9 family. Requires Cu(2+) as cofactor.

The protein resides in the secreted. The enzyme catalyses [(1-&gt;4)-beta-D-glucosyl]n+m + reduced acceptor + O2 = 4-dehydro-beta-D-glucosyl-[(1-&gt;4)-beta-D-glucosyl]n-1 + [(1-&gt;4)-beta-D-glucosyl]m + acceptor + H2O.. Its function is as follows. Lytic polysaccharide monooxygenase (LPMO) that depolymerizes crystalline and amorphous polysaccharides via the oxidation of scissile alpha- or beta-(1-4)-glycosidic bonds, yielding C1 and C4 oxidation products. Catalysis by LPMOs requires the reduction of the active-site copper from Cu(II) to Cu(I) by a reducing agent and H(2)O(2) or O(2) as a cosubstrate. Shows endoglucanase activity on tamarind xyloglucan, as well as on beechwood xylan when combined with phosphoric acid swollen cellulose (PASC). Shows no activity on wheat arabinoxylan, konjac glucomannan, acetylated spruce galactoglucomannan, or cellopentaose. The chain is AA9 family lytic polysaccharide monooxygenase E from Thermothielavioides terrestris (strain ATCC 38088 / NRRL 8126) (Thielavia terrestris).